The sequence spans 335 residues: Transcriptional coactivator YAP1-B (335 aa).

Residues 1–13 (MEPGSQQQPSAPG) show a composition bias toward low complexity. Residues 1–21 (MEPGSQQQPSAPGQQPPPVGH) are disordered. Position 30 is a phosphoserine; by LATS1 and LATS2 (S30). The span at 114–124 (MNQQRLSQSAP) shows a compositional bias: polar residues. The tract at residues 114-146 (MNQQRLSQSAPVKSPPALQPQSPPSGVLGSGGN) is disordered. Positions 126-136 (KSPPALQPQSP) are enriched in pro residues. Positions 137–335 (PSGVLGSGGN…LDKESFLTWL (199 aa)) are transactivation domain. Residues 145–173 (GNQQMRLQQLQMEKERLRLKHQELLRQVR) are a coiled coil.

The protein belongs to the YAP1 family. Phosphorylated by lats1 and lats2; leading to cytoplasmic translocation and inactivation.

Its subcellular location is the cytoplasm. The protein localises to the nucleus. It is found in the cell junction. The protein resides in the tight junction. It localises to the cell membrane. Its function is as follows. Transcriptional regulator which can act both as a coactivator and a corepressor and is the critical downstream regulatory target in the Hippo signaling pathway that plays a pivotal role in organ size control and tumor suppression by restricting proliferation and promoting apoptosis. Plays a key role in tissue tension and 3D tissue shape by regulating cortical actomyosin network formation. This Xenopus laevis (African clawed frog) protein is Transcriptional coactivator YAP1-B.